Consider the following 590-residue polypeptide: Melanophilin (590 aa).

The 121-residue stretch at 4–124 folds into the RabBD domain; that stretch reads RLDLSTLTDE…IGSLEWYYQH (121 aa). Residues 64 to 107 form an FYVE-type zinc finger; that stretch reads CARCLQPYRLLLNSRRQCLECSLFVCKSCSHAHPEEQGWLCDPC. Disordered stretches follow at residues 147–182, 215–276, 311–335, 361–472, and 485–590; these read GGGG…PLNS, SVPE…AELD, DTSD…ARTV, VLPP…SEIS, and GLTV…AQQP. The span at 154 to 172 shows a compositional bias: acidic residues; the sequence is SLEEGNGDSEQTDEDGDLD. Residues 215–238 show a composition bias toward polar residues; it reads SVPESAHSLQSLSGEPYSEDTTSL. Residues 339–485 adopt a coiled-coil conformation; the sequence is QILELNKRMS…SRIAALRAAG (147 aa). Positions 391–401 are enriched in low complexity; sequence LTSNISGSSTS. Basic and acidic residues predominate over residues 424-433; sequence GHMETQERNP.

As to quaternary structure, binds RAB27A that has been activated by GTP-binding via its N-terminus. Binds MYO5A via its C-terminal coiled coil domain. As to expression, highly expressed in embryos at day 7; not detectable at day 11. Highly expressed in adult stomach; detected at lower levels in kidney, lung, skin and small intestine. Detected in melanocytes.

It is found in the melanosome. In terms of biological role, rab effector protein involved in melanosome transport. Serves as link between melanosome-bound RAB27A and the motor protein MYO5A. This Mus musculus (Mouse) protein is Melanophilin (Mlph).